Here is a 507-residue protein sequence, read N- to C-terminus: Protein MosB (507 aa).

Positions 256-275 (QAHGALYKGQHVGLLSDIGC) form a DNA-binding region, H-T-H motif. Lys282 is modified (N6-(pyridoxal phosphate)lysine).

Belongs to the DegT/DnrJ/EryC1 family.

In terms of biological role, involved in the biosynthesis of the rhizopine 3-O-methyl-scyllo-inosamine. May have a regulatory role in controlling the housekeeping genes within the nodule which are involved in the biosynthesis of the rhizopine backbone. This chain is Protein MosB (mosB), found in Rhizobium meliloti (Ensifer meliloti).